The primary structure comprises 446 residues: CBL-interacting serine/threonine-protein kinase 24 (446 aa).

The 254-residue stretch at 11–264 (YEVGRTIGEG…IQGIKKDPWF (254 aa)) folds into the Protein kinase domain. Residues 17-25 (IGEGTFAKV) and Lys40 contribute to the ATP site. Catalysis depends on Asp134, which acts as the Proton acceptor. The interval 152–179 (DFGLSALPQEGVELLRTTCGTPNYVAPE) is activation loop. Ser156 carries the post-translational modification Phosphoserine. Phosphothreonine is present on Thr168. The NAF domain maps to 305-329 (EGPLMMNAFEMITLSQGLNLSALFD). A PPI region spans residues 336–365 (KRQTRFVSRREPSEIIANIEAVANSMGFKS).

The protein belongs to the protein kinase superfamily. CAMK Ser/Thr protein kinase family. SNF1 subfamily. As to quaternary structure, interacts with CBL1, CBL2, CBL4/SOS3, CBL5, CBL9, CBL10 and with the protein phosphatase 2C ABI2. The cofactor is Mn(2+). Autophosphorylated.

The protein localises to the cytoplasm. It is found in the nucleus. The enzyme catalyses L-seryl-[protein] + ATP = O-phospho-L-seryl-[protein] + ADP + H(+). It carries out the reaction L-threonyl-[protein] + ATP = O-phospho-L-threonyl-[protein] + ADP + H(+). Its function is as follows. Involved in the regulatory pathway for the control of intracellular Na(+) and K(+) homeostasis and salt tolerance. Activates the vacuolar H(+)/Ca(2+) antiporter CAX1 and operates in synergy with CBL4/SOS3 to activate the plasma membrane Na(+)/H(+) antiporter SOS1. CIPK serine-threonine protein kinases interact with CBL proteins. Binding of a CBL protein to the regulatory NAF domain of CIPK protein lead to the activation of the kinase in a calcium-dependent manner. Phosphorylates CBL1, CBL4 and CBL10. The chain is CBL-interacting serine/threonine-protein kinase 24 (CIPK24) from Arabidopsis thaliana (Mouse-ear cress).